Reading from the N-terminus, the 345-residue chain is L-threonine 3-dehydrogenase (345 aa).

Cys-39 provides a ligand contact to Zn(2+). Active-site charge relay system residues include Thr-41 and His-44. Residues His-64, Glu-65, Cys-94, Cys-97, Cys-100, and Cys-108 each coordinate Zn(2+). NAD(+) is bound by residues Ile-176, Asp-196, Arg-201, 263–265, and 287–288; these read LGI and VY.

The protein belongs to the zinc-containing alcohol dehydrogenase family. As to quaternary structure, homotetramer. It depends on Zn(2+) as a cofactor.

Its subcellular location is the cytoplasm. The catalysed reaction is L-threonine + NAD(+) = (2S)-2-amino-3-oxobutanoate + NADH + H(+). The protein operates within amino-acid degradation; L-threonine degradation via oxydo-reductase pathway; glycine from L-threonine: step 1/2. Its function is as follows. Catalyzes the NAD(+)-dependent oxidation of L-threonine to 2-amino-3-ketobutyrate. This Anaeromyxobacter dehalogenans (strain 2CP-C) protein is L-threonine 3-dehydrogenase.